The chain runs to 313 residues: Ribosomal RNA small subunit methyltransferase H (313 aa).

S-adenosyl-L-methionine-binding positions include 35-37 (GGH), Asp55, Phe79, Asp101, and Gln108.

The protein belongs to the methyltransferase superfamily. RsmH family.

The protein localises to the cytoplasm. The catalysed reaction is cytidine(1402) in 16S rRNA + S-adenosyl-L-methionine = N(4)-methylcytidine(1402) in 16S rRNA + S-adenosyl-L-homocysteine + H(+). Specifically methylates the N4 position of cytidine in position 1402 (C1402) of 16S rRNA. This Salmonella agona (strain SL483) protein is Ribosomal RNA small subunit methyltransferase H.